The following is a 572-amino-acid chain: Sulfite reductase [NADPH] hemoprotein beta-component (572 aa).

Positions 437, 443, 482, and 486 each coordinate [4Fe-4S] cluster. C486 is a siroheme binding site.

The protein belongs to the nitrite and sulfite reductase 4Fe-4S domain family. Alpha(8)-beta(8). The alpha component is a flavoprotein, the beta component is a hemoprotein. Siroheme is required as a cofactor. [4Fe-4S] cluster serves as cofactor.

The catalysed reaction is hydrogen sulfide + 3 NADP(+) + 3 H2O = sulfite + 3 NADPH + 4 H(+). The protein operates within sulfur metabolism; hydrogen sulfide biosynthesis; hydrogen sulfide from sulfite (NADPH route): step 1/1. In terms of biological role, component of the sulfite reductase complex that catalyzes the 6-electron reduction of sulfite to sulfide. This is one of several activities required for the biosynthesis of L-cysteine from sulfate. The polypeptide is Sulfite reductase [NADPH] hemoprotein beta-component (Lysinibacillus sphaericus (strain C3-41)).